An 886-amino-acid polypeptide reads, in one-letter code: Valine--tRNA ligase (886 aa).

Residues 53-63 (PNVTGSLHMGH) carry the 'HIGH' region motif. The short motif at 540–544 (KMSKS) is the 'KMSKS' region element. Lys543 is an ATP binding site. Positions 819-851 (TIDVAAERRRLEKELAGAQKELASTAAKLANAD) form a coiled coil.

It belongs to the class-I aminoacyl-tRNA synthetase family. ValS type 1 subfamily. In terms of assembly, monomer.

Its subcellular location is the cytoplasm. It carries out the reaction tRNA(Val) + L-valine + ATP = L-valyl-tRNA(Val) + AMP + diphosphate. Catalyzes the attachment of valine to tRNA(Val). As ValRS can inadvertently accommodate and process structurally similar amino acids such as threonine, to avoid such errors, it has a 'posttransfer' editing activity that hydrolyzes mischarged Thr-tRNA(Val) in a tRNA-dependent manner. The sequence is that of Valine--tRNA ligase from Mycobacterium tuberculosis (strain CDC 1551 / Oshkosh).